A 417-amino-acid chain; its full sequence is 3-isopropylmalate dehydratase large subunit (417 aa).

The [4Fe-4S] cluster site is built by Cys298, Cys358, and Cys361.

This sequence belongs to the aconitase/IPM isomerase family. LeuC type 2 subfamily. Heterodimer of LeuC and LeuD. [4Fe-4S] cluster is required as a cofactor.

The enzyme catalyses (2R,3S)-3-isopropylmalate = (2S)-2-isopropylmalate. The protein operates within amino-acid biosynthesis; L-leucine biosynthesis; L-leucine from 3-methyl-2-oxobutanoate: step 2/4. Functionally, catalyzes the isomerization between 2-isopropylmalate and 3-isopropylmalate, via the formation of 2-isopropylmaleate. The polypeptide is 3-isopropylmalate dehydratase large subunit (Thermoanaerobacter pseudethanolicus (strain ATCC 33223 / 39E) (Clostridium thermohydrosulfuricum)).